A 253-amino-acid polypeptide reads, in one-letter code: 3-deoxy-manno-octulosonate cytidylyltransferase (253 aa).

It belongs to the KdsB family.

It localises to the cytoplasm. The enzyme catalyses 3-deoxy-alpha-D-manno-oct-2-ulosonate + CTP = CMP-3-deoxy-beta-D-manno-octulosonate + diphosphate. The protein operates within nucleotide-sugar biosynthesis; CMP-3-deoxy-D-manno-octulosonate biosynthesis; CMP-3-deoxy-D-manno-octulosonate from 3-deoxy-D-manno-octulosonate and CTP: step 1/1. It participates in bacterial outer membrane biogenesis; lipopolysaccharide biosynthesis. In terms of biological role, activates KDO (a required 8-carbon sugar) for incorporation into bacterial lipopolysaccharide in Gram-negative bacteria. This Neisseria gonorrhoeae (strain ATCC 700825 / FA 1090) protein is 3-deoxy-manno-octulosonate cytidylyltransferase.